Here is a 413-residue protein sequence, read N- to C-terminus: Tryptophan synthase beta chain (413 aa).

Lys106 is subject to N6-(pyridoxal phosphate)lysine.

Belongs to the TrpB family. Tetramer of two alpha and two beta chains. Pyridoxal 5'-phosphate serves as cofactor.

The enzyme catalyses (1S,2R)-1-C-(indol-3-yl)glycerol 3-phosphate + L-serine = D-glyceraldehyde 3-phosphate + L-tryptophan + H2O. It functions in the pathway amino-acid biosynthesis; L-tryptophan biosynthesis; L-tryptophan from chorismate: step 5/5. The beta subunit is responsible for the synthesis of L-tryptophan from indole and L-serine. The protein is Tryptophan synthase beta chain of Methylorubrum populi (strain ATCC BAA-705 / NCIMB 13946 / BJ001) (Methylobacterium populi).